Reading from the N-terminus, the 130-residue chain is Small ribosomal subunit protein uS8z/uS8w (130 aa).

It belongs to the universal ribosomal protein uS8 family.

Its subcellular location is the cytoplasm. This Arabidopsis thaliana (Mouse-ear cress) protein is Small ribosomal subunit protein uS8z/uS8w (RPS15AA).